The chain runs to 342 residues: Uroporphyrinogen decarboxylase (342 aa).

Substrate-binding positions include 26–30 (RQAGR), D76, Y150, S205, and H321.

The protein belongs to the uroporphyrinogen decarboxylase family. Homodimer.

The protein localises to the cytoplasm. It catalyses the reaction uroporphyrinogen III + 4 H(+) = coproporphyrinogen III + 4 CO2. The protein operates within porphyrin-containing compound metabolism; protoporphyrin-IX biosynthesis; coproporphyrinogen-III from 5-aminolevulinate: step 4/4. Its function is as follows. Catalyzes the decarboxylation of four acetate groups of uroporphyrinogen-III to yield coproporphyrinogen-III. The sequence is that of Uroporphyrinogen decarboxylase from Sphingopyxis alaskensis (strain DSM 13593 / LMG 18877 / RB2256) (Sphingomonas alaskensis).